Consider the following 602-residue polypeptide: Putative pentatricopeptide repeat-containing protein At1g12700, mitochondrial (602 aa).

The transit peptide at 1 to 95 directs the protein to the mitochondrion; the sequence is MMIKRSITTN…PSLVDFSRFF (95 aa). PPR repeat units follow at residues 87–121, 122–156, 157–191, 192–226, 227–261, 262–296, 297–331, 332–366, 367–401, 402–436, 437–471, 472–506, 507–541, and 542–576; these read SLVDFSRFFSAIARTKQFNLVLDFCKQLELNGIAH, NIYTLNIMINCFCRCCKTCFAYSVLGKVMKLGYEP, DTTTFNTLIKGLFLEGKVSEAVVLVDRMVENGCQP, DVVTYNSIVNGICRSGDTSLALDLLRKMEERNVKA, DVFTYSTIIDSLCRDGCIDAAISLFKEMETKGIKS, SVVTYNSLVRGLCKAGKWNDGALLLKDMVSREIVP, NVITFNVLLDVFVKEGKLQEANELYKEMITRGISP, NIITYNTLMDGYCMQNRLSEANNMLDLMVRNKCSP, DIVTFTSLIKGYCMVKRVDDGMKVFRNISKRGLVA, NAVTYSILVQGFCQSGKIKLAEELFQEMVSHGVLP, DVMTYGILLDGLCDNGKLEKALEIFEDLQKSKMDL, GIVMYTTIIEGMCKGGKVEDAWNLFCSLPCKGVKP, NVMTYTVMISGLCKKGSLSEANILLRKMEEDGNAP, and NDCTYNTLIRAHLRDGDLTASAKLIEEMKSCGFSA.

Belongs to the PPR family. P subfamily.

It localises to the mitochondrion. This Arabidopsis thaliana (Mouse-ear cress) protein is Putative pentatricopeptide repeat-containing protein At1g12700, mitochondrial.